Here is a 321-residue protein sequence, read N- to C-terminus: Phosphatidate cytidylyltransferase, mitochondrial (321 aa).

The protein belongs to the TAM41 family. Mg(2+) is required as a cofactor. Co(2+) serves as cofactor. Requires Cu(2+) as cofactor.

The protein localises to the mitochondrion inner membrane. It carries out the reaction a 1,2-diacyl-sn-glycero-3-phosphate + CTP + H(+) = a CDP-1,2-diacyl-sn-glycerol + diphosphate. The protein operates within phospholipid metabolism; CDP-diacylglycerol biosynthesis; CDP-diacylglycerol from sn-glycerol 3-phosphate: step 3/3. Catalyzes the formation of CDP-diacylglycerol (CDP-DAG) from phosphatidic acid (PA) in the mitochondrial inner membrane. Required for the biosynthesis of the dimeric phospholipid cardiolipin, which stabilizes supercomplexes of the mitochondrial respiratory chain in the mitochondrial inner membrane. The sequence is that of Phosphatidate cytidylyltransferase, mitochondrial from Caenorhabditis briggsae.